The primary structure comprises 109 residues: Parvalbumin, muscle (109 aa).

A1 is subject to N-acetylalanine. EF-hand domains lie at 38–73 (KSPE…FTPD) and 77–109 (LSDK…VAES). The Ca(2+) site is built by D51, D53, S55, E62, D90, D92, D94, K96, and E101.

It belongs to the parvalbumin family.

Its function is as follows. In muscle, parvalbumin is thought to be involved in relaxation after contraction. It binds two calcium ions. The sequence is that of Parvalbumin, muscle from Gallus gallus (Chicken).